The chain runs to 416 residues: Exodeoxyribonuclease 7 large subunit (416 aa).

Belongs to the XseA family. Heterooligomer composed of large and small subunits.

It localises to the cytoplasm. It carries out the reaction Exonucleolytic cleavage in either 5'- to 3'- or 3'- to 5'-direction to yield nucleoside 5'-phosphates.. Functionally, bidirectionally degrades single-stranded DNA into large acid-insoluble oligonucleotides, which are then degraded further into small acid-soluble oligonucleotides. This Acidothermus cellulolyticus (strain ATCC 43068 / DSM 8971 / 11B) protein is Exodeoxyribonuclease 7 large subunit.